The primary structure comprises 284 residues: Homeobox-leucine zipper protein HAT4 (284 aa).

The span at 48–59 (ESFTSSVPNSDS) shows a compositional bias: polar residues. The segment at 48 to 132 (ESFTSSVPNS…DGDNSRKKLR (85 aa)) is disordered. Low complexity predominate over residues 89–100 (VSSPNSTVSSST). A DNA-binding region (homeobox) is located at residues 126–185 (NSRKKLRLSKDQSAILEETFKDHSTLNPKQKQALAKQLGLRARQVEVWFQNRRARTKLKQ). The interval 193-214 (LRRCCENLTEENRRLQKEVTEL) is leucine-zipper.

This sequence belongs to the HD-ZIP homeobox family. Class II subfamily. Interacts with DNA as homodimer. In terms of tissue distribution, predominantly expressed in leaves and stems.

The protein resides in the nucleus. In terms of biological role, probable transcription factor involved in the negative regulation of cell elongation and specific cell proliferation processes such as lateral root formation and secondary growth of the vascular system. Acts as a mediator of the red/far-red light effects on leaf cell expansion in the shading response. Binds to the DNA sequence 5'-CAAT[GC]ATTG-3'. Negatively regulates its own expression. This Arabidopsis thaliana (Mouse-ear cress) protein is Homeobox-leucine zipper protein HAT4 (HAT4).